The primary structure comprises 351 residues: Protein-glutamate methylesterase/protein-glutamine glutaminase 2 (351 aa).

Residues 5–122 (RVICVDDSAL…RDGLLDYSEL (118 aa)) form the Response regulatory domain. Asp-56 is modified (4-aspartylphosphate). One can recognise a CheB-type methylesterase domain in the interval 154 to 341 (LNSSEKLVIL…PLPAMSERIL (188 aa)). Catalysis depends on residues Ser-166, His-192, and Asp-289.

The protein belongs to the CheB family. Post-translationally, phosphorylated by CheA. Phosphorylation of the N-terminal regulatory domain activates the methylesterase activity.

It is found in the cytoplasm. The catalysed reaction is [protein]-L-glutamate 5-O-methyl ester + H2O = L-glutamyl-[protein] + methanol + H(+). It carries out the reaction L-glutaminyl-[protein] + H2O = L-glutamyl-[protein] + NH4(+). Involved in chemotaxis. Part of a chemotaxis signal transduction system that modulates chemotaxis in response to various stimuli. Catalyzes the demethylation of specific methylglutamate residues introduced into the chemoreceptors (methyl-accepting chemotaxis proteins or MCP) by CheR. Also mediates the irreversible deamidation of specific glutamine residues to glutamic acid. The chain is Protein-glutamate methylesterase/protein-glutamine glutaminase 2 from Bordetella avium (strain 197N).